We begin with the raw amino-acid sequence, 128 residues long: Small ribosomal subunit protein bS6 (128 aa).

This sequence belongs to the bacterial ribosomal protein bS6 family.

Its function is as follows. Binds together with bS18 to 16S ribosomal RNA. In Thermotoga sp. (strain RQ2), this protein is Small ribosomal subunit protein bS6.